Here is a 309-residue protein sequence, read N- to C-terminus: Ribonuclease Z (309 aa).

7 residues coordinate Zn(2+): His63, His65, Asp67, His68, His145, Asp216, and His274. Asp67 acts as the Proton acceptor in catalysis.

Belongs to the RNase Z family. Homodimer. The cofactor is Zn(2+).

It catalyses the reaction Endonucleolytic cleavage of RNA, removing extra 3' nucleotides from tRNA precursor, generating 3' termini of tRNAs. A 3'-hydroxy group is left at the tRNA terminus and a 5'-phosphoryl group is left at the trailer molecule.. Zinc phosphodiesterase, which displays some tRNA 3'-processing endonuclease activity. Probably involved in tRNA maturation, by removing a 3'-trailer from precursor tRNA. The polypeptide is Ribonuclease Z (Streptococcus pneumoniae serotype 2 (strain D39 / NCTC 7466)).